A 1061-amino-acid chain; its full sequence is MFFVYRSNQIDILFTKICKIIKKKPLLNIFEREIIIHDNEILFQNLNTFIANHTGIAADFKLIYPNVFIWKLFKQVFSDIQLNNIFSRSTITWKIMKIIEENDFCKFVQKKDKIMKKFEFSFLMSHLYQQYILYRPNWINMWEKNKKNTLKIEKKDEWQAKLWIKIILYTEKLQQSKWHFSNLFKKFKTLKKIEHIKFPKRIFIIYSISLNPKYMEIFKKISTYTDIYFLSINACEKKIFHISFAKNYVVQKNNLLMNLSEKYEKFYFLFFKKFKKIKYNNFFQKNNSNNLLNIVKNDFLNFKEKENLLKKNSFLLKDNSISINICCDKKHEIEVLYNKLLSFFNEDSKLKPSDIVITSFSLNTYIIYINSIFKSKNKKEKIPFYISKKHSDKIEKILFIFNKILNLPNIRCNNEEILDLIEIQDIRDKFDISEEEINILYEWIEKANIRWGLHENEKQKNNLIFIKKNQNTWFYGIKKLLISHAINEEEEVWNNVLSCTSINTSRTELIGKLINFIKVLDQWRDKLFFSKKIKSWRPLFLCFIKDFFYKNEKIRDSIDIINKTWTKMIDDATLSNYEKKIPISILKKKFSHIMNNFSEKKFLPGVINFCHPSLVCYIPFKIKCIIGAEYQEIPKKKLSSFNLIDKYPLTSDLHICKENYIFLQNFISTQETLYISYVGHSLKNNNKVRSSILIDQLLNHITSNFYVSEHHDYKNNKKEIFEHICKKHKKENLYEKKQVNKINLNTLQKTKKINQEIYNKIFSIKNRIISTSTQISLKSLISFWKNPIRYFFNYTLNIKLKIAKRNIITEPFSINLFDDFKISNIIFKKILNNESIKDEFKKIILSGILPYGHFGSILLKEKKKEIENIVKAIYKYRISSPKKENFDIKIEKYNINGCLDEIQNTGLLRWKLGTINYRDRISLWLEHLIYCILGGTGESKIIGYKKNFFSFYPLSSHLAYNYLFTYIEGYMKGMKNPLLLIKSGSNWFDKVYDKKNDCIKKNDDIKRKAYKILYHTWMGNEYITGEKEDLYIQQIISELNVKKICKISQKWFTPILKHQKK.

This sequence belongs to the RecC family. Heterotrimer of RecB, RecC and RecD. All subunits contribute to DNA-binding.

Its function is as follows. A helicase/nuclease that prepares dsDNA breaks (DSB) for recombinational DNA repair. Binds to DSBs and unwinds DNA via a highly rapid and processive ATP-dependent bidirectional helicase activity. Unwinds dsDNA until it encounters a Chi (crossover hotspot instigator) sequence from the 3' direction. Cuts ssDNA a few nucleotides 3' to the Chi site. The properties and activities of the enzyme are changed at Chi. The Chi-altered holoenzyme produces a long 3'-ssDNA overhang and facilitates RecA-binding to the ssDNA for homologous DNA recombination and repair. Holoenzyme degrades any linearized DNA that is unable to undergo homologous recombination. In the holoenzyme this subunit recognizes the wild-type Chi sequence, and when added to isolated RecB increases its ATP-dependent helicase processivity. The protein is RecBCD enzyme subunit RecC of Buchnera aphidicola subsp. Schizaphis graminum (strain Sg).